Reading from the N-terminus, the 315-residue chain is tRNA dimethylallyltransferase (315 aa).

13 to 20 (GPTAVGKT) is a binding site for ATP. 15 to 20 (TAVGKT) contributes to the substrate binding site. The interaction with substrate tRNA stretch occupies residues 38–41 (DSRL).

It belongs to the IPP transferase family. As to quaternary structure, monomer. Mg(2+) is required as a cofactor.

It carries out the reaction adenosine(37) in tRNA + dimethylallyl diphosphate = N(6)-dimethylallyladenosine(37) in tRNA + diphosphate. Its function is as follows. Catalyzes the transfer of a dimethylallyl group onto the adenine at position 37 in tRNAs that read codons beginning with uridine, leading to the formation of N6-(dimethylallyl)adenosine (i(6)A). The chain is tRNA dimethylallyltransferase from Herpetosiphon aurantiacus (strain ATCC 23779 / DSM 785 / 114-95).